We begin with the raw amino-acid sequence, 460 residues long: Argininosuccinate lyase (460 aa).

The protein belongs to the lyase 1 family. Argininosuccinate lyase subfamily.

It localises to the cytoplasm. It catalyses the reaction 2-(N(omega)-L-arginino)succinate = fumarate + L-arginine. The protein operates within amino-acid biosynthesis; L-arginine biosynthesis; L-arginine from L-ornithine and carbamoyl phosphate: step 3/3. This is Argininosuccinate lyase from Nitratidesulfovibrio vulgaris (strain DSM 19637 / Miyazaki F) (Desulfovibrio vulgaris).